An 841-amino-acid polypeptide reads, in one-letter code: Translation initiation factor IF-2 (841 aa).

Basic and acidic residues-rich tracts occupy residues 1 to 12 (MSDNEIKNEAPK), 50 to 92 (EAAL…EATK), 114 to 170 (EQPK…REEA), 188 to 202 (READ…EANR), and 213 to 235 (KKGD…DVKG). Disordered regions lie at residues 1–24 (MSDN…KTTV) and 50–246 (EAAL…GSAL). One can recognise a tr-type G domain in the interval 340 to 510 (TRAPVVTIMG…LLQSEVLELT (171 aa)). Positions 349–356 (GHVDHGKT) are G1. 349–356 (GHVDHGKT) contacts GTP. Residues 374 to 378 (GITQH) are G2. The G3 stretch occupies residues 396–399 (DTPG). Residues 396 to 400 (DTPGH) and 450 to 453 (NKID) contribute to the GTP site. The segment at 450 to 453 (NKID) is G4. Residues 486-488 (SAK) form a G5 region.

The protein belongs to the TRAFAC class translation factor GTPase superfamily. Classic translation factor GTPase family. IF-2 subfamily.

Its subcellular location is the cytoplasm. One of the essential components for the initiation of protein synthesis. Protects formylmethionyl-tRNA from spontaneous hydrolysis and promotes its binding to the 30S ribosomal subunits. Also involved in the hydrolysis of GTP during the formation of the 70S ribosomal complex. This chain is Translation initiation factor IF-2, found in Actinobacillus pleuropneumoniae serotype 3 (strain JL03).